A 275-amino-acid chain; its full sequence is Leucine-rich repeat-containing protein 3C (275 aa).

Residues 1–41 form the signal peptide; the sequence is MRMTSSSFVSYCTPGLCQFMAMLPTAGHLLPLLLVIGTGGT. Positions 42-79 constitute an LRRNT domain; sequence VPSPQVPPRGCYVAKEAGERTFRCSQAGLSAVPSGIPN. 3 LRR repeats span residues 80–101, 104–125, and 129–150; these read DTRK…AFQH, VLEE…AFQG, and TLRH…AFVG. Asn156 carries N-linked (GlcNAc...) asparagine glycosylation. In terms of domain architecture, LRRCT spans 160-212; sequence NPWHCDCALQEVLRQVRLVPGTGTGIVCGSGARPDLVGQEFLLLAGEEELCGS. Residues 225–245 form a helical membrane-spanning segment; the sequence is LLVTMGGWLTLMVAYLVHYVW.

Belongs to the LRRC3 family.

The protein resides in the membrane. The protein is Leucine-rich repeat-containing protein 3C (LRRC3C) of Homo sapiens (Human).